The following is a 576-amino-acid chain: Alpha-bisabolol synthase (576 aa).

(2E,6E)-farnesyl diphosphate-binding residues include arginine 286, aspartate 323, aspartate 327, arginine 466, and asparagine 469. Mg(2+) contacts are provided by aspartate 323 and aspartate 327. A DDXXD motif motif is present at residues 323-327 (DDVYD). Residues asparagine 469, threonine 473, and glutamate 477 each coordinate Mg(2+).

This sequence belongs to the terpene synthase family. Tpsb subfamily. Mg(2+) serves as cofactor. It depends on Mn(2+) as a cofactor.

In terms of biological role, produces a mixture of beta-bisabolene and alpha-bisabolol, along with traces of alpha-bisabolene and farnesene isomers from (2E,6E)-farnesyl diphosphate in fragrance biosynthesis. The chain is Alpha-bisabolol synthase from Santalum spicatum (Australian sandalwood).